Reading from the N-terminus, the 108-residue chain is uncharacterized protein (108 aa).

Positions 1–24 are cleaved as a signal peptide; it reads MNLWEFRFGKSFLFIPNFIMKVLA.

It to M.jannaschii MJ0803.

This is an uncharacterized protein from Methanocaldococcus jannaschii (strain ATCC 43067 / DSM 2661 / JAL-1 / JCM 10045 / NBRC 100440) (Methanococcus jannaschii).